A 613-amino-acid chain; its full sequence is Leucine-rich repeat and immunoglobulin-like domain-containing nogo receptor-interacting protein 1 (613 aa).

An N-terminal signal peptide occupies residues 1 to 34 (MLAGEASMRSPILACWQPILLLMLGSILSGSATG). 2 disulfide bridges follow: Cys35/Cys41 and Cys39/Cys50. An LRRNT domain is found at 35–64 (CPPRCECSAQERAVLCHRKRFMVVPEGIPT). Residues 35–554 (CPPRCECSAQ…FDIKTLIIAT (520 aa)) are Extracellular-facing. LRR repeat units lie at residues 65–86 (ETRQ…EFAN), 89–110 (HLEE…AFNN), 113–134 (NLRT…VFTG), 137–158 (NLTK…MFQD), 161–182 (NLKS…AFSG), 185–206 (SLEQ…ALSH), 209–230 (GLIV…SFKR), 257–278 (NLTS…SVRH), 281–302 (YLRF…MLHD), 305–326 (RLQE…AFRG), and 329–350 (YLRI…AFHS). Asn137 carries N-linked (GlcNAc...) asparagine glycosylation. Asn195 carries an N-linked (GlcNAc...) asparagine glycan. N-linked (GlcNAc...) asparagine glycosylation is found at Asn257, Asn267, and Asn286. N-linked (GlcNAc...) asparagine glycosylation occurs at Asn334. In terms of domain architecture, LRRCT spans 362–416 (NPLACDCRLLWVFRRRWRLNFNKQQPTCSTPEFVQGKEFKDFPDVLLPNYFTCRR). 3 disulfides stabilise this stretch: Cys366–Cys389, Cys368–Cys414, and Cys439–Cys490. Positions 404-508 (PDVLLPNYFT…DTMLAHLHVR (105 aa)) constitute an Ig-like C2-type domain. Residues Asn485, Asn498, Asn519, Asn530, and Asn535 are each glycosylated (N-linked (GlcNAc...) asparagine). A helical membrane pass occupies residues 555–575 (TMGFISFLGVVLFCLVLLFLW). At 576-613 (SRGKGNTKHNIEIEYVPRKSDAGISSADAPRKFNMKMI) the chain is on the cytoplasmic side.

As to quaternary structure, homotetramer. Forms ternary complex with RTN4R/NGFR and RTN4R/TNFRSF19. N-glycosylated. Contains predominantly high-mannose glycans.

It is found in the cell membrane. Functionally, functional component of the Nogo receptor signaling complex (RTN4R/NGFR) in RhoA activation responsible for some inhibition of axonal regeneration by myelin-associated factors. Is also an important negative regulator of oligodentrocyte differentiation and axonal myelination. The chain is Leucine-rich repeat and immunoglobulin-like domain-containing nogo receptor-interacting protein 1 (LINGO1) from Gallus gallus (Chicken).